The sequence spans 128 residues: Large ribosomal subunit protein uL22 (128 aa).

Belongs to the universal ribosomal protein uL22 family. As to quaternary structure, part of the 50S ribosomal subunit.

Functionally, this protein binds specifically to 23S rRNA; its binding is stimulated by other ribosomal proteins, e.g. L4, L17, and L20. It is important during the early stages of 50S assembly. It makes multiple contacts with different domains of the 23S rRNA in the assembled 50S subunit and ribosome. Its function is as follows. The globular domain of the protein is located near the polypeptide exit tunnel on the outside of the subunit, while an extended beta-hairpin is found that lines the wall of the exit tunnel in the center of the 70S ribosome. In Methylocella silvestris (strain DSM 15510 / CIP 108128 / LMG 27833 / NCIMB 13906 / BL2), this protein is Large ribosomal subunit protein uL22.